Here is a 902-residue protein sequence, read N- to C-terminus: Viral-enhancing factor (902 aa).

The Peptidase M60 domain maps to 27 to 330 (HRRTEVGVVL…IFAWLYNPQR (304 aa)). 10 N-linked (GlcNAc...) asparagine; by host glycosylation sites follow: asparagine 73, asparagine 265, asparagine 278, asparagine 339, asparagine 540, asparagine 593, asparagine 594, asparagine 620, asparagine 782, and asparagine 840.

Involved in disruption of the peritrophic membrane and fusion of nucleocapsids with midgut cells. This chain is Viral-enhancing factor (VEF), found in Heliothis (HaGV).